A 183-amino-acid chain; its full sequence is MKKKTTLSEEDQALFRQLMAGTRKIKQDTIVHRPQRKKISEVPVKRLIQEQADASHYFSDEFQPLLNTEGPVKYVRPDVSHFEAKKLRRGDYSPELFLDLHGLTQLQAKQELGALIAACRREHVFCACVMHGHGKHILKQQTPLWLAQHPHVMAFHQAPKEYGGDAALLVLIEVEEWLPPELP.

In terms of domain architecture, Smr spans 98–173 (LDLHGLTQLQ…GDAALLVLIE (76 aa)).

The protein belongs to the SmrB family. In terms of assembly, associates with collided ribosomes, but not with correctly translating polysomes.

Acts as a ribosome collision sensor. Detects stalled/collided disomes (pairs of ribosomes where the leading ribosome is stalled and a second ribosome has collided with it) and endonucleolytically cleaves mRNA at the 5' boundary of the stalled ribosome. Stalled/collided disomes form a new interface (primarily via the 30S subunits) that binds SmrB. Cleaved mRNA becomes available for tmRNA ligation, leading to ribosomal subunit dissociation and rescue of stalled ribosomes. The protein is Ribosome rescue factor SmrB of Shigella boydii serotype 18 (strain CDC 3083-94 / BS512).